Reading from the N-terminus, the 235-residue chain is Ribonuclease 3 (235 aa).

Residues 6–131 (IDQLEKLTGH…LIAVIYLDGG (126 aa)) form the RNase III domain. Position 44 (E44) interacts with Mg(2+). The active site involves D48. Positions 117 and 120 each coordinate Mg(2+). The active site involves E120. The region spanning 156-225 (DAKTQLQEWA…AEKILRREGI (70 aa)) is the DRBM domain.

Belongs to the ribonuclease III family. As to quaternary structure, homodimer. Requires Mg(2+) as cofactor.

Its subcellular location is the cytoplasm. It catalyses the reaction Endonucleolytic cleavage to 5'-phosphomonoester.. Digests double-stranded RNA. Involved in the processing of primary rRNA transcript to yield the immediate precursors to the large and small rRNAs (23S and 16S). Processes some mRNAs, and tRNAs when they are encoded in the rRNA operon. Processes pre-crRNA and tracrRNA of type II CRISPR loci if present in the organism. The polypeptide is Ribonuclease 3 (Bartonella henselae (strain ATCC 49882 / DSM 28221 / CCUG 30454 / Houston 1) (Rochalimaea henselae)).